The primary structure comprises 398 residues: 1-deoxy-D-xylulose 5-phosphate reductoisomerase (398 aa).

NADPH is bound by residues T10, G11, S12, I13, G36, K37, N38, and N124. Residue K125 participates in 1-deoxy-D-xylulose 5-phosphate binding. Residue E126 participates in NADPH binding. D150 provides a ligand contact to Mn(2+). Residues S151, E152, S186, and H209 each coordinate 1-deoxy-D-xylulose 5-phosphate. Position 152 (E152) interacts with Mn(2+). G215 lines the NADPH pocket. The 1-deoxy-D-xylulose 5-phosphate site is built by S222, N227, K228, and E231. E231 is a binding site for Mn(2+).

Belongs to the DXR family. In terms of assembly, homodimer. Requires Mg(2+) as cofactor. It depends on Mn(2+) as a cofactor.

The catalysed reaction is 2-C-methyl-D-erythritol 4-phosphate + NADP(+) = 1-deoxy-D-xylulose 5-phosphate + NADPH + H(+). It participates in isoprenoid biosynthesis; isopentenyl diphosphate biosynthesis via DXP pathway; isopentenyl diphosphate from 1-deoxy-D-xylulose 5-phosphate: step 1/6. Functionally, catalyzes the NADPH-dependent rearrangement and reduction of 1-deoxy-D-xylulose-5-phosphate (DXP) to 2-C-methyl-D-erythritol 4-phosphate (MEP). This is 1-deoxy-D-xylulose 5-phosphate reductoisomerase from Shigella flexneri.